A 215-amino-acid chain; its full sequence is FMN-dependent NADH:quinone oxidoreductase (215 aa).

An FMN-binding site is contributed by 17-19 (SAS).

It belongs to the azoreductase type 1 family. As to quaternary structure, homodimer. FMN serves as cofactor.

The catalysed reaction is 2 a quinone + NADH + H(+) = 2 a 1,4-benzosemiquinone + NAD(+). It carries out the reaction N,N-dimethyl-1,4-phenylenediamine + anthranilate + 2 NAD(+) = 2-(4-dimethylaminophenyl)diazenylbenzoate + 2 NADH + 2 H(+). Quinone reductase that provides resistance to thiol-specific stress caused by electrophilic quinones. Functionally, also exhibits azoreductase activity. Catalyzes the reductive cleavage of the azo bond in aromatic azo compounds to the corresponding amines. The protein is FMN-dependent NADH:quinone oxidoreductase of Clostridium botulinum (strain Eklund 17B / Type B).